The primary structure comprises 371 residues: Deoxyuridine 5'-triphosphate nucleotidohydrolase (371 aa).

Residues 260–262 (RSS) and 366–367 (FG) each bind substrate. The interval 350 to 371 (NEFDAEAPPSERGTGGFGSTGI) is disordered. Residues 362-371 (GTGGFGSTGI) show a composition bias toward gly residues.

Belongs to the dUTPase family. The cofactor is Mg(2+).

The catalysed reaction is dUTP + H2O = dUMP + diphosphate + H(+). In terms of biological role, involved in nucleotide metabolism: produces dUMP, the immediate precursor of thymidine nucleotides and decreases the intracellular concentration of dUTP to avoid uracil incorporation into viral DNA. The sequence is that of Deoxyuridine 5'-triphosphate nucleotidohydrolase from Homo sapiens (Human).